The chain runs to 150 residues: Peptide deformylase (150 aa).

Fe cation contacts are provided by Cys-88 and His-130. The active site involves Glu-131. His-134 provides a ligand contact to Fe cation.

The protein belongs to the polypeptide deformylase family. Requires Fe(2+) as cofactor.

It catalyses the reaction N-terminal N-formyl-L-methionyl-[peptide] + H2O = N-terminal L-methionyl-[peptide] + formate. In terms of biological role, removes the formyl group from the N-terminal Met of newly synthesized proteins. Requires at least a dipeptide for an efficient rate of reaction. N-terminal L-methionine is a prerequisite for activity but the enzyme has broad specificity at other positions. The polypeptide is Peptide deformylase (Desulfitobacterium hafniense (strain Y51)).